The following is a 287-amino-acid chain: 26S proteasome non-ATPase regulatory subunit 8 (287 aa).

Position 43 is a phosphoserine (S43). Residues P99–P268 enclose the PCI domain. Residue K234 forms a Glycyl lysine isopeptide (Lys-Gly) (interchain with G-Cter in SUMO2) linkage.

It belongs to the proteasome subunit S14 family. As to quaternary structure, component of the 19S proteasome regulatory particle complex. The 26S proteasome consists of a 20S core particle (CP) and two 19S regulatory subunits (RP). The regulatory particle is made of a lid composed of 9 subunits including PSMD8, a base containing 6 ATPases and few additional components. Interacts with DDI2. Interacts with TASOR.

Component of the 26S proteasome, a multiprotein complex involved in the ATP-dependent degradation of ubiquitinated proteins. This complex plays a key role in the maintenance of protein homeostasis by removing misfolded or damaged proteins, which could impair cellular functions, and by removing proteins whose functions are no longer required. Therefore, the proteasome participates in numerous cellular processes, including cell cycle progression, apoptosis, or DNA damage repair. In Bos taurus (Bovine), this protein is 26S proteasome non-ATPase regulatory subunit 8 (PSMD8).